Here is a 232-residue protein sequence, read N- to C-terminus: Thiamine import ATP-binding protein ThiQ (232 aa).

Positions 2 to 230 constitute an ABC transporter domain; that stretch reads LKLTDITWLY…KGSASAIWGI (229 aa). Position 32–39 (32–39) interacts with ATP; sequence GPSGAGKS.

The protein belongs to the ABC transporter superfamily. Thiamine importer (TC 3.A.1.19.1) family. The complex is composed of two ATP-binding proteins (ThiQ), two transmembrane proteins (ThiP) and a solute-binding protein (ThiB).

It is found in the cell inner membrane. The catalysed reaction is thiamine(out) + ATP + H2O = thiamine(in) + ADP + phosphate + H(+). Functionally, part of the ABC transporter complex ThiBPQ involved in thiamine import. Responsible for energy coupling to the transport system. The sequence is that of Thiamine import ATP-binding protein ThiQ from Shigella flexneri.